The sequence spans 291 residues: Pantothenate synthetase 1 (291 aa).

Residue His-37 is the Proton donor of the active site. An ATP-binding site is contributed by 147–150 (GEKD). Residue Gln-153 participates in (R)-pantoate binding. Residue 184 to 187 (ISSR) participates in ATP binding.

It belongs to the pantothenate synthetase family. As to quaternary structure, homodimer.

It is found in the cytoplasm. The catalysed reaction is (R)-pantoate + beta-alanine + ATP = (R)-pantothenate + AMP + diphosphate + H(+). It functions in the pathway cofactor biosynthesis; (R)-pantothenate biosynthesis; (R)-pantothenate from (R)-pantoate and beta-alanine: step 1/1. Its function is as follows. Catalyzes the condensation of pantoate with beta-alanine in an ATP-dependent reaction via a pantoyl-adenylate intermediate. This is Pantothenate synthetase 1 from Frankia alni (strain DSM 45986 / CECT 9034 / ACN14a).